The primary structure comprises 290 residues: Nucleotide-binding protein Sde_3181 (290 aa).

8-15 (GRSGSGKT) contributes to the ATP binding site. Residue 60 to 63 (DARN) coordinates GTP.

Belongs to the RapZ-like family.

Displays ATPase and GTPase activities. This Saccharophagus degradans (strain 2-40 / ATCC 43961 / DSM 17024) protein is Nucleotide-binding protein Sde_3181.